Reading from the N-terminus, the 265-residue chain is Elongation factor 1-delta (265 aa).

Polar residues predominate over residues 31–54 (MGSASNKPHNSPQSAASALSNSGD). Disordered regions lie at residues 31-64 (MGSA…RVAN) and 118-155 (KVQV…DAEA). The segment covering 130–153 (GTGEDDDDDDDIDLFGSDNEEEDA) has biased composition (acidic residues).

The protein belongs to the EF-1-beta/EF-1-delta family. As to quaternary structure, EF-1 is composed of 4 subunits: alpha, beta, delta, and gamma.

Functionally, EF-1-beta and EF-1-delta stimulate the exchange of GDP bound to EF-1-alpha to GTP. The sequence is that of Elongation factor 1-delta (eef1d) from Xenopus laevis (African clawed frog).